Reading from the N-terminus, the 485-residue chain is Glutamyl-tRNA(Gln) amidotransferase subunit A (485 aa).

Residues Lys-79 and Ser-154 each act as charge relay system in the active site. Ser-178 (acyl-ester intermediate) is an active-site residue.

It belongs to the amidase family. GatA subfamily. As to quaternary structure, heterotrimer of A, B and C subunits.

The catalysed reaction is L-glutamyl-tRNA(Gln) + L-glutamine + ATP + H2O = L-glutaminyl-tRNA(Gln) + L-glutamate + ADP + phosphate + H(+). Functionally, allows the formation of correctly charged Gln-tRNA(Gln) through the transamidation of misacylated Glu-tRNA(Gln) in organisms which lack glutaminyl-tRNA synthetase. The reaction takes place in the presence of glutamine and ATP through an activated gamma-phospho-Glu-tRNA(Gln). The chain is Glutamyl-tRNA(Gln) amidotransferase subunit A from Geobacillus kaustophilus (strain HTA426).